The sequence spans 358 residues: DnaJ homolog subfamily C member 18 (358 aa).

One can recognise a J domain in the interval 82-146 (NYYEILGVSR…DKRLRYDEYG (65 aa)). Residues 228 to 248 (AFIQLLPVLVIVIISVITQLL) form a helical membrane-spanning segment.

It localises to the endoplasmic reticulum membrane. This is DnaJ homolog subfamily C member 18 (DNAJC18) from Bos taurus (Bovine).